A 513-amino-acid chain; its full sequence is uncharacterized protein (513 aa).

This sequence belongs to the NodU/CmcH family.

This is an uncharacterized protein from Methanocaldococcus jannaschii (strain ATCC 43067 / DSM 2661 / JAL-1 / JCM 10045 / NBRC 100440) (Methanococcus jannaschii).